The following is a 148-amino-acid chain: Large ribosomal subunit protein uL15 (148 aa).

A compositionally biased stretch (basic and acidic residues) spans 1 to 12 (MSDPIKLHDLRP). The tract at residues 1 to 45 (MSDPIKLHDLRPAKGANKAKTRVGRGEASKGKTAGRGTKGTKARN) is disordered.

Belongs to the universal ribosomal protein uL15 family. Part of the 50S ribosomal subunit.

Binds to the 23S rRNA. In Corynebacterium urealyticum (strain ATCC 43042 / DSM 7109), this protein is Large ribosomal subunit protein uL15.